Here is a 2225-residue protein sequence, read N- to C-terminus: Multifunctional protein CAD (2225 aa).

Ala-2 carries the N-acetylalanine modification. The tract at residues 2 to 365 is GATase (Glutamine amidotransferase); the sequence is AALVLEDGSV…TVKEATAGNP (364 aa). L-glutamine-binding residues include Ser-44, Gly-222, and Gly-224. Positions 177–363 constitute a Glutamine amidotransferase type-1 domain; that stretch reads RILALDCGLK…LETVKEATAG (187 aa). The active-site Nucleophile; for GATase activity is Cys-252. Residues Leu-253, Gln-256, Asn-294, Gly-296, and Phe-297 each coordinate L-glutamine. Residues His-336 and Glu-338 each act as for GATase activity in the active site. The linker stretch occupies residues 366-394; that stretch reads GGQTVRERLTERLCPPGIPTPGSGLPPPR. Residues 395–933 form a CPSase A region; it reads KVLILGSGGL…TTHDLTFRTP (539 aa). The segment at 395-1455 is CPSase (Carbamoyl phosphate synthase); it reads KVLILGSGGL…APPLKVHVDC (1061 aa). Residue Thr-456 is modified to Phosphothreonine; by MAPK1. ATP contacts are provided by Arg-515, Arg-555, Gly-561, Gly-562, Lys-592, Glu-599, Gly-625, Ile-626, His-627, Gln-668, and Glu-682. The ATP-grasp 1 domain occupies 519-711; it reads AARMAEIGEH…LAYVAAKLAL (193 aa). The Mg(2+) site is built by Gln-668, Glu-682, and Asn-684. Mn(2+)-binding residues include Gln-668, Glu-682, and Asn-684. Lys-747 carries the post-translational modification N6-acetyllysine. The interval 934-1455 is CPSase B; the sequence is HVLVLGSGVY…APPLKVHVDC (522 aa). Ser-1038 is modified (phosphoserine). The ATP-grasp 2 domain maps to 1052 to 1243; sequence SRLLDTIGIS…LVALATRVIM (192 aa). Residues Arg-1088, Lys-1127, Ile-1129, Glu-1134, Gly-1159, Val-1160, His-1161, Ser-1162, Gln-1202, and Glu-1214 each contribute to the ATP site. Mg(2+) is bound by residues Gln-1202, Glu-1214, and Asn-1216. 3 residues coordinate Mn(2+): Gln-1202, Glu-1214, and Asn-1216. Residues 1308–1462 enclose the MGS-like domain; sequence FKIPKKNILL…VDCMTSQKLV (155 aa). Ser-1406 bears the Phosphoserine; by PKA mark. Position 1411 is an N6-acetyllysine (Lys-1411). The interval 1456–1788 is DHOase (dihydroorotase); the sequence is MTSQKLVRLP…VKGTVRRVVL (333 aa). Positions 1471 and 1473 each coordinate Zn(2+). The (S)-dihydroorotate site is built by Arg-1475 and Asn-1505. 5 residues coordinate Zn(2+): Lys-1556, His-1590, Cys-1613, His-1614, and Glu-1637. Lys-1556 bears the N6-carboxylysine mark. Arg-1661 is a binding site for (S)-dihydroorotate. Asp-1686 is a Zn(2+) binding site. Residue Asp-1686 is the For DHOase activity of the active site. The (S)-dihydroorotate site is built by His-1690 and Pro-1702. The linker stretch occupies residues 1789–1917; the sequence is RGEVAYIDGQ…GLLHPQTSPL (129 aa). The segment at 1811–1899 is disordered; it reads KWPQGAVPQL…YPPPPVPRQA (89 aa). Positions 1825–1834 are enriched in polar residues; that stretch reads PATSEMTTTP. A Phosphoserine; by RPS6KB1 and PKA modification is found at Ser-1859. Positions 1866 to 1878 are enriched in basic and acidic residues; that stretch reads EEPKEKSSRKVAE. Ser-1873 carries the phosphoserine; by PKC; in vitro modification. Phosphothreonine is present on Thr-1884. Ser-1900 and Ser-1938 each carry phosphoserine. The tract at residues 1918-2225 is ATCase (Aspartate transcarbamylase); that stretch reads LHSLVGQHIL…ALLATVLGRF (308 aa). Arg-1975 and Thr-1976 together coordinate carbamoyl phosphate. L-aspartate is bound at residue Lys-2003. Carbamoyl phosphate-binding residues include Arg-2024, His-2052, and Gln-2055. Residues Arg-2085 and Arg-2146 each coordinate L-aspartate. Positions 2185 and 2186 each coordinate carbamoyl phosphate.

It in the N-terminal section; belongs to the CarA family. In the 2nd section; belongs to the CarB family. This sequence in the 3rd section; belongs to the metallo-dependent hydrolases superfamily. DHOase family. CAD subfamily. The protein in the C-terminal section; belongs to the aspartate/ornithine carbamoyltransferase superfamily. ATCase family. Homohexamer. Interacts with CIPC. Requires Zn(2+) as cofactor. Mg(2+) serves as cofactor. Mn(2+) is required as a cofactor. Activated by MAP kinase (Erk1/2) phosphorylation just prior to the S phase of the cell cycle, when the demand for pyrimidine nucleotides is greatest, and down-regulated as the cells emerge from S phase by protein kinase A (PKA) phosphorylation. Phosphorylation at Ser-1859 by RPS6KB1 downstream of MTOR promotes oligomerization and stimulates dihydroorotase activity. Phosphorylation at Ser-1406 reduces sensitivity to feedback inhibition by UTP.

It localises to the cytoplasm. The protein resides in the nucleus. It carries out the reaction hydrogencarbonate + L-glutamine + 2 ATP + H2O = carbamoyl phosphate + L-glutamate + 2 ADP + phosphate + 2 H(+). The enzyme catalyses L-glutamine + H2O = L-glutamate + NH4(+). The catalysed reaction is hydrogencarbonate + NH4(+) + 2 ATP = carbamoyl phosphate + 2 ADP + phosphate + 2 H(+). It catalyses the reaction carbamoyl phosphate + L-aspartate = N-carbamoyl-L-aspartate + phosphate + H(+). It carries out the reaction (S)-dihydroorotate + H2O = N-carbamoyl-L-aspartate + H(+). It participates in pyrimidine metabolism; UMP biosynthesis via de novo pathway; (S)-dihydroorotate from bicarbonate: step 1/3. The protein operates within pyrimidine metabolism; UMP biosynthesis via de novo pathway; (S)-dihydroorotate from bicarbonate: step 2/3. It functions in the pathway pyrimidine metabolism; UMP biosynthesis via de novo pathway; (S)-dihydroorotate from bicarbonate: step 3/3. With respect to regulation, allosterically regulated and controlled by phosphorylation. 5-phosphoribose 1-diphosphate (PRPP) is an activator while UMP and UTP are inhibitors of the CPSase reaction. Its function is as follows. Multifunctional protein that encodes the first 3 enzymatic activities of the de novo pyrimidine pathway: carbamoylphosphate synthetase (CPSase; EC 6.3.5.5), aspartate transcarbamylase (ATCase; EC 2.1.3.2) and dihydroorotase (DHOase; EC 3.5.2.3). The CPSase-function is accomplished in 2 steps, by a glutamine-dependent amidotransferase activity (GATase) that binds and cleaves glutamine to produce ammonia, followed by an ammonium-dependent carbamoyl phosphate synthetase, which reacts with the ammonia, hydrogencarbonate and ATP to form carbamoyl phosphate. The endogenously produced carbamoyl phosphate is sequestered and channeled to the ATCase active site. ATCase then catalyzes the formation of carbamoyl-L-aspartate from L-aspartate and carbamoyl phosphate. In the last step, DHOase catalyzes the cyclization of carbamoyl aspartate to dihydroorotate. This chain is Multifunctional protein CAD, found in Homo sapiens (Human).